The chain runs to 783 residues: Probable potassium transporter 2 (783 aa).

The Cytoplasmic portion of the chain corresponds to 1 to 21 (MDAEAGVGGADQLPWRQHYRN). The helical transmembrane segment at 22–42 (LLLLAYQSFGVVYGDLSTSPL) threads the bilayer. Residues 43 to 61 (YVYKSTFSGRLRRYQDEQT) are Extracellular-facing. Residues 62–82 (VFGVLSLIFWTFTLIPLLKYV) form a helical membrane-spanning segment. Residues 83-152 (TIVLSADDNG…FMEKHKNART (70 aa)) are Cytoplasmic-facing. The chain crosses the membrane as a helical span at residues 153–173 (VLLLIVLCGASMMIGDGILTP). Residues 174–189 (AISVLSSMSGLKVRAT) lie on the Extracellular side of the membrane. A helical membrane pass occupies residues 190–210 (GLHDRSVVLLSCIVLVGLFAL). Residues 211 to 217 (QHRGTQK) are Cytoplasmic-facing. Residues 218 to 238 (VAFMFAPIVVIWLFCIGGIGL) traverse the membrane as a helical segment. The Extracellular segment spans residues 239–268 (YNIIHWNPRIYQALSPYYIVKFFRTTGKDG). The helical transmembrane segment at 269 to 289 (WIALGGILLSMTGCEAMFADL) threads the bilayer. At 290–298 (GHFTSASVR) the chain is on the cytoplasmic side. The chain crosses the membrane as a helical span at residues 299–319 (LAFITIIYPCLILQYMGQAAF). The Extracellular segment spans residues 320-338 (LSKNILDMPTGFYDSIPGP). A helical transmembrane segment spans residues 339–359 (IFWPVFVVATLAAVVGSQAVI). Residues 360–390 (SATFSIVKQCHSLGCFPRVKVVHTSRWIYGQ) are Cytoplasmic-facing. Residues 391–411 (IYIPEINWILMVLCVAVTVAF) traverse the membrane as a helical segment. Residues 412–422 (RDITLIGNAYG) are Extracellular-facing. The chain crosses the membrane as a helical span at residues 423-443 (VACMTVMFVTTFLMALIMIFV). Residues 444 to 447 (WQKN) lie on the Cytoplasmic side of the membrane. A helical transmembrane segment spans residues 448-468 (IIFALSFFLLFGSVEVVYLSS). Topologically, residues 469–475 (SLMKVTQ) are extracellular. The helical transmembrane segment at 476-496 (GGWVPLVLALIFMSVMYIWHY) threads the bilayer. The Cytoplasmic portion of the chain corresponds to 497–783 (GTRKKYQYDL…LIEVGMAYQV (287 aa)). Residues 662–691 (DLADSMTMRSTKSESLRSLQSSYEQESPNV) form a disordered region. Polar residues predominate over residues 677 to 691 (LRSLQSSYEQESPNV).

This sequence belongs to the HAK/KUP transporter (TC 2.A.72.3) family.

The protein resides in the cell membrane. The catalysed reaction is K(+)(in) = K(+)(out). It carries out the reaction Na(+)(in) = Na(+)(out). Functionally, high-affinity potassium transporter. Can transport sodium under high sodium and low potassium concentrations in the extracellular environment. This is Probable potassium transporter 2 (HAK2) from Oryza sativa subsp. japonica (Rice).